The sequence spans 238 residues: Leucine-rich repeat-containing protein 57 (238 aa).

LRR repeat units follow at residues 39–60, 62–84, 85–106, 108–129, 131–152, 153–175, 176–196, and 201–221; these read NLRTIDLSSNKIEVVPPMMGKF, LLKSLSLNNNRISRLPDELCKLK, KLETLHLNGNQISQLPADFVQL, ALKTLNLSGNRLKTLPAQLFKL, NLDVVDLSKNRIQAIPDEVSGL, QAIELNLNQNQISQISVNISHCP, RLKVLRLEENCLELSMLPPSI, and QISLLAVEGNLFEIKKLRDLE.

This chain is Leucine-rich repeat-containing protein 57 (lrrc57), found in Xenopus laevis (African clawed frog).